Consider the following 392-residue polypeptide: Cellobiose 2-epimerase (392 aa).

It belongs to the cellobiose 2-epimerase family.

The catalysed reaction is D-cellobiose = beta-D-glucosyl-(1-&gt;4)-D-mannopyranose. Functionally, catalyzes the reversible epimerization of cellobiose to 4-O-beta-D-glucopyranosyl-D-mannose (Glc-Man). Can also epimerize cellotriose to Glc-Glc-Man, cellotetraose to Glc-Glc-Glc-Man, lactose to epilactose, and mannobiose to 4-O-beta-D-mannopyranosyl-D-glucopyranose (Man-Glc). May function as a mannobiose 2-epimerase in vivo and be involved in a mannan catabolic pathway which feeds into glycolysis. The protein is Cellobiose 2-epimerase (bfce) of Bacteroides fragilis (strain ATCC 25285 / DSM 2151 / CCUG 4856 / JCM 11019 / LMG 10263 / NCTC 9343 / Onslow / VPI 2553 / EN-2).